An 828-amino-acid chain; its full sequence is Glycerol-3-phosphate acyltransferase (828 aa).

An HXXXXD motif motif is present at residues 309 to 314 (CHRSHI).

The protein belongs to the GPAT/DAPAT family.

Its subcellular location is the cell inner membrane. The catalysed reaction is sn-glycerol 3-phosphate + an acyl-CoA = a 1-acyl-sn-glycero-3-phosphate + CoA. It functions in the pathway phospholipid metabolism; CDP-diacylglycerol biosynthesis; CDP-diacylglycerol from sn-glycerol 3-phosphate: step 1/3. This chain is Glycerol-3-phosphate acyltransferase, found in Pseudomonas entomophila (strain L48).